The sequence spans 456 residues: Bifunctional protein GlmU (456 aa).

Residues 1–229 form a pyrophosphorylase region; that stretch reads MTKKALSAVI…VMEVEGANNR (229 aa). Residues 11 to 14, Lys-25, Gln-76, 81 to 82, 103 to 105, Gly-140, Glu-154, Asn-169, and Asn-227 contribute to the UDP-N-acetyl-alpha-D-glucosamine site; these read LAAG, GT, and YGD. Residue Asp-105 participates in Mg(2+) binding. Asn-227 contacts Mg(2+). A linker region spans residues 230 to 250; that stretch reads LQLAALERYLQNKQASKLLLE. An N-acetyltransferase region spans residues 251 to 456; the sequence is GVMIYDPARF…QGWQRPIKKK (206 aa). Positions 333 and 351 each coordinate UDP-N-acetyl-alpha-D-glucosamine. Residue His-363 is the Proton acceptor of the active site. 2 residues coordinate UDP-N-acetyl-alpha-D-glucosamine: Tyr-366 and Asn-377. Acetyl-CoA is bound by residues Ala-380, 386-387, Ser-405, Ala-423, and Arg-440; that span reads NY.

This sequence in the N-terminal section; belongs to the N-acetylglucosamine-1-phosphate uridyltransferase family. It in the C-terminal section; belongs to the transferase hexapeptide repeat family. As to quaternary structure, homotrimer. The cofactor is Mg(2+).

It localises to the cytoplasm. The enzyme catalyses alpha-D-glucosamine 1-phosphate + acetyl-CoA = N-acetyl-alpha-D-glucosamine 1-phosphate + CoA + H(+). It carries out the reaction N-acetyl-alpha-D-glucosamine 1-phosphate + UTP + H(+) = UDP-N-acetyl-alpha-D-glucosamine + diphosphate. It participates in nucleotide-sugar biosynthesis; UDP-N-acetyl-alpha-D-glucosamine biosynthesis; N-acetyl-alpha-D-glucosamine 1-phosphate from alpha-D-glucosamine 6-phosphate (route II): step 2/2. It functions in the pathway nucleotide-sugar biosynthesis; UDP-N-acetyl-alpha-D-glucosamine biosynthesis; UDP-N-acetyl-alpha-D-glucosamine from N-acetyl-alpha-D-glucosamine 1-phosphate: step 1/1. Its pathway is bacterial outer membrane biogenesis; LPS lipid A biosynthesis. Functionally, catalyzes the last two sequential reactions in the de novo biosynthetic pathway for UDP-N-acetylglucosamine (UDP-GlcNAc). The C-terminal domain catalyzes the transfer of acetyl group from acetyl coenzyme A to glucosamine-1-phosphate (GlcN-1-P) to produce N-acetylglucosamine-1-phosphate (GlcNAc-1-P), which is converted into UDP-GlcNAc by the transfer of uridine 5-monophosphate (from uridine 5-triphosphate), a reaction catalyzed by the N-terminal domain. The protein is Bifunctional protein GlmU of Haemophilus influenzae (strain PittEE).